A 442-amino-acid polypeptide reads, in one-letter code: Urokinase-type plasminogen activator (442 aa).

An N-terminal signal peptide occupies residues 1-20; that stretch reads MRVLRACLSLCVLVVSDSKG. The EGF-like domain maps to 29 to 65; that stretch reads GASNCGCLNGGKCVSYKYFSNIQRCSCPKKFQGEHCE. Cystine bridges form between Cys33–Cys41, Cys35–Cys53, Cys55–Cys64, Cys72–Cys153, Cys93–Cys135, Cys124–Cys148, Cys179–Cys310, Cys220–Cys236, Cys228–Cys299, Cys324–Cys393, Cys356–Cys372, and Cys383–Cys411. The tract at residues 36-59 is binds urokinase plasminogen activator surface receptor; it reads LNGGKCVSYKYFSNIQRCSCPKKF. Residues 72–153 enclose the Kringle domain; that stretch reads CFEGNGHSYR…LVQECMVPNC (82 aa). A glycan (N-linked (GlcNAc...) asparagine) is linked at Asn152. A connecting peptide region spans residues 154-189; the sequence is SGGESHRPAYDGKNPFSTPEKVEFQCGQKALRPRFK. One can recognise a Peptidase S1 domain in the interval 190-435; it reads IVGGKSTTIE…FLTWIHTHVG (246 aa). Active-site charge relay system residues include His235 and Asp286. Residue Ser387 is the Charge relay system of the active site.

This sequence belongs to the peptidase S1 family. As to quaternary structure, found in high and low molecular mass forms. Each consists of two chains, A and B. The high molecular mass form contains a long chain A which is cleaved to yield a short chain A. Forms heterodimer with SERPINA5. Binds LRP1B; binding is followed by internalization and degradation. Interacts with MRC2. Interacts with PLAUR. In complex with SERPINE1, interacts with PLAUR/uPAR. Interacts with SORL1 and LRP1, either alone or in complex with SERPINE1; these interactions are abolished in the presence of LRPAP1/RAP. The ternary complex composed of PLAUR-PLAU-PAI1 also interacts with SORLA. Post-translationally, produced as an inactive single-chain protein (pro-uPA or sc-uPA), is processed into the active disulfide-linked two-chain form of PLAU/uPA by a proteolytic event mediated, at least, by TMPRSS4.

Its subcellular location is the secreted. It carries out the reaction Specific cleavage of Arg-|-Val bond in plasminogen to form plasmin.. Its activity is regulated as follows. Inhibited by SERPINA5. Inhibited by SERPINE1. Specifically cleaves the zymogen plasminogen to form the active enzyme plasmin. The protein is Urokinase-type plasminogen activator (PLAU) of Sus scrofa (Pig).